The chain runs to 441 residues: Histidinol dehydrogenase homolog (441 aa).

Residue His-266 participates in Zn(2+) binding. Catalysis depends on proton acceptor residues Glu-334 and His-335. Residue His-427 participates in Zn(2+) binding.

Belongs to the histidinol dehydrogenase family. Zn(2+) is required as a cofactor.

In Cereibacter sphaeroides (strain ATCC 17023 / DSM 158 / JCM 6121 / CCUG 31486 / LMG 2827 / NBRC 12203 / NCIMB 8253 / ATH 2.4.1.) (Rhodobacter sphaeroides), this protein is Histidinol dehydrogenase homolog.